Reading from the N-terminus, the 892-residue chain is Zinc finger protein 512B (892 aa).

The tract at residues 1-82 (MTDPFCVGGR…KKGRPKAENQ (82 aa)) is disordered. Residues 8 to 19 (GGRRLPGSSKSG) are compositionally biased toward low complexity. Residues 105–129 (VKCPNSGCWLEFPSIYGLKYHYQRC) form a C2H2-type 1; atypical zinc finger. The segment at 140–163 (FPCPFCEAAFTSKTQLEKHRIWNH) adopts a C2H2-type 2 zinc-finger fold. Disordered stretches follow at residues 323 to 473 (MVLL…RKKV) and 562 to 582 (EHSA…EERE). Residues 371–384 (SMGQSSAFQLSADT) are compositionally biased toward polar residues. The segment covering 385-398 (SSGSLSPGSRPSGG) has biased composition (low complexity). Ser409 carries the post-translational modification Phosphoserine. Residues 418–428 (TKHRRKQKTPK) are compositionally biased toward basic residues. The short motif at 421–427 (RRKQKTP) is the NuRD interaction motif element. The C2H2-type 3 zinc-finger motif lies at 540-563 (LKCQHCRKQFKSKAGLNYHTMAEH). The segment at 594–618 (LRCPQEGCGAAFSSLMGYQYHQRRC) adopts a C2H2-type 4; atypical zinc-finger fold. Residues 630 to 653 (FPCTHCGKTYRSKAGHDYHVRSEH) form a C2H2-type 5 zinc finger. The disordered stretch occupies residues 649-682 (VRSEHTAPPPEEPTDKSPEAEDPLGVERTPSGRV). At Ser686 the chain carries Phosphoserine. A C2H2-type 6; atypical zinc finger spans residues 750–774 (VNCPNDCCEAIYSSVSGLKAHLASC). Residues 784-807 (YRCLLCPKEFSSESGVKYHILKTH) form a C2H2-type 7 zinc finger. Residues 812–892 (FRTSADPPPK…KVGVSKAPEK (81 aa)) form a disordered region. A compositionally biased stretch (basic and acidic residues) spans 819-831 (PPKHRSQDSLVPK). Residues 832–849 (KEKKKNLAGGKKRGRKPK) show a composition bias toward basic residues. The span at 850-876 (ERTPEEPVAKLPPRRDDWPPGCRDKGA) shows a compositional bias: basic and acidic residues.

Belongs to the krueppel C2H2-type zinc-finger protein family. As to quaternary structure, interacts (via its NuRD interaction motif) with RBBP4 of the nucleosome remodeling and deacetylase (NuRD) complex; the interaction is direct and may play a role in repressing gene expression.

Its subcellular location is the nucleus. Its function is as follows. Involved in transcriptional regulation by repressing gene expression. Associates with the nucleosome remodeling and histone deacetylase (NuRD) complex, which promotes transcriptional repression by histone deacetylation and nucleosome remodeling. In Homo sapiens (Human), this protein is Zinc finger protein 512B (ZNF512B).